The primary structure comprises 349 residues: Isopentenyl-diphosphate delta-isomerase (349 aa).

Residue 6 to 7 (RK) coordinates substrate. Residues 62-64 (AMT), serine 93, and asparagine 122 contribute to the FMN site. Glutamine 152 is a binding site for substrate. Glutamate 153 lines the Mg(2+) pocket. FMN contacts are provided by residues lysine 184, threonine 214, 258-259 (GG), and 280-281 (AG).

It belongs to the IPP isomerase type 2 family. As to quaternary structure, homooctamer. Dimer of tetramers. FMN is required as a cofactor. The cofactor is NADPH. It depends on Mg(2+) as a cofactor.

The protein resides in the cytoplasm. The enzyme catalyses isopentenyl diphosphate = dimethylallyl diphosphate. Functionally, involved in the biosynthesis of isoprenoids. Catalyzes the 1,3-allylic rearrangement of the homoallylic substrate isopentenyl (IPP) to its allylic isomer, dimethylallyl diphosphate (DMAPP). This chain is Isopentenyl-diphosphate delta-isomerase, found in Bacillus thuringiensis subsp. konkukian (strain 97-27).